The sequence spans 134 residues: Profilin (134 aa).

The protein belongs to the profilin family. In terms of assembly, occurs in many kinds of cells as a complex with monomeric actin in a 1:1 ratio.

Its subcellular location is the cytoplasm. It localises to the cytoskeleton. Binds to actin and affects the structure of the cytoskeleton. At high concentrations, profilin prevents the polymerization of actin, whereas it enhances it at low concentrations. By binding to PIP2, it inhibits the formation of IP3 and DG. This Daucus carota (Wild carrot) protein is Profilin.